Consider the following 908-residue polypeptide: MFSSIARKIFGSKNAREIKRMGKVVKRINELEESISALDEAALKAKTQEFRSRLEKGETLEQLLPEAFAVAREAGKRVMGMRHFDVQLIGGMVLHEGKIAEMRTGEGKTLVATLPVYLNALSGKGVHVVTVNDYLARRDADWMRPLYEYLGLSVGVVVSGQDGETKRAAYASDITYGTNNEFGFDYLRDNMAFSLTDKAQRGQHFAIVDEVDSILIDEARTPLIISGPAEDSSELYRKINELVPQLKKGEPPEEGQPVDGHFTVDEKSRSVELSESGHTYVEELLTKNGLLEEGDSLYAATNLGLLHHISSALRAHHLYSKDVDYIVQNGQVVIVDEHTGRTMPGRRWGEGLHQAIEAKERIKIQAESQTLASTTFQNYFRLYEKLAGMTGTADTEAFEFRQIYGLDVIVIPTNKPIKRIDYNDLVYLSVDEKFQAVIDDIKDTVTQNRPVLVGTASIEASEYLSAMLKKEGIAHNVLNAKQHEREAHVIAQAGRPGAVTIATNMAGRGTDIVLGGNWEADVAELEDPTPEQIAKIKADWQKRHDQVIAAGGLHVVGSERHESRRIDNQLRGRSGRQGDPGSTRFYLSLEDNLMRIFASDRVKNIMQALGMQKGEAIEHRMVSNAIEKAQRKVEGRNFDIRKSLLEYDDVANDQRHVVYEQRNEIMATDDISEMIDAIRGDVVSATVSQFIPPQSIAEQWNVPGLEKQLESDFGVDLPVQQWLDEDKRLHEETLREKILQAVVDSYREKEEVVGASVMRNFEKQVFLQVLDTLWKEHLSNMDLLRMGIHLRGYAQKNPKQEYKREAFELFQNMLDTIKHDVVRVICHVRVQKQEEMEELERRRREALAQQMQRAQATHPEATEEDSDAEEQAEGSDAPYVRDHKKVGRNEPCPCGSGKKYKQCHGRLE.

Residues glutamine 87, 105–109 (GEGKT), and aspartate 511 contribute to the ATP site. A compositionally biased stretch (basic and acidic residues) spans 559-570 (ERHESRRIDNQL). Disordered stretches follow at residues 559 to 582 (ERHESRRIDNQLRGRSGRQGDPGS) and 841 to 908 (RRRR…GRLE). Over residues 847–856 (LAQQMQRAQA) the composition is skewed to low complexity. Residues 862 to 873 (TEEDSDAEEQAE) are compositionally biased toward acidic residues. Residues cysteine 892, cysteine 894, cysteine 903, and histidine 904 each contribute to the Zn(2+) site. Positions 898–908 (KKYKQCHGRLE) are enriched in basic residues.

This sequence belongs to the SecA family. As to quaternary structure, monomer and homodimer. Part of the essential Sec protein translocation apparatus which comprises SecA, SecYEG and auxiliary proteins SecDF-YajC and YidC. The cofactor is Zn(2+).

Its subcellular location is the cell inner membrane. The protein localises to the cytoplasm. The catalysed reaction is ATP + H2O + cellular proteinSide 1 = ADP + phosphate + cellular proteinSide 2.. Functionally, part of the Sec protein translocase complex. Interacts with the SecYEG preprotein conducting channel. Has a central role in coupling the hydrolysis of ATP to the transfer of proteins into and across the cell membrane, serving both as a receptor for the preprotein-SecB complex and as an ATP-driven molecular motor driving the stepwise translocation of polypeptide chains across the membrane. The sequence is that of Protein translocase subunit SecA from Hahella chejuensis (strain KCTC 2396).